A 538-amino-acid chain; its full sequence is C-22 sterol desaturase ERG5 (538 aa).

A helical membrane pass occupies residues 46–66 (LKIFATLICILLVWDQVAYQI). Glycyl lysine isopeptide (Lys-Gly) (interchain with G-Cter in ubiquitin) cross-links involve residues Lys164 and Lys198. Cys476 is a heme binding site.

This sequence belongs to the cytochrome P450 family. In terms of assembly, interacts with ERG28. The cofactor is heme.

The protein localises to the endoplasmic reticulum membrane. The enzyme catalyses 5-dehydroepisterol + NADPH + O2 + H(+) = ergosta-5,7,22,24(28)-tetraen-3beta-ol + NADP(+) + 2 H2O. Its pathway is steroid metabolism; ergosterol biosynthesis; ergosterol from zymosterol: step 4/5. C-22 sterol desaturase; part of the third module of ergosterol biosynthesis pathway that includes the late steps of the pathway. ERG5 converts 5-dehydroepisterol into ergosta-5,7,22,24(28)-tetraen-3beta-ol by forming the C-22(23) double bond in the sterol side chain. The third module or late pathway involves the ergosterol synthesis itself through consecutive reactions that mainly occur in the endoplasmic reticulum (ER) membrane. Firstly, the squalene synthase ERG9 catalyzes the condensation of 2 farnesyl pyrophosphate moieties to form squalene, which is the precursor of all steroids. Squalene synthase is crucial for balancing the incorporation of farnesyl diphosphate (FPP) into sterol and nonsterol isoprene synthesis. Secondly, the squalene epoxidase ERG1 catalyzes the stereospecific oxidation of squalene to (S)-2,3-epoxysqualene, which is considered to be a rate-limiting enzyme in steroid biosynthesis. Then, the lanosterol synthase ERG7 catalyzes the cyclization of (S)-2,3 oxidosqualene to lanosterol, a reaction that forms the sterol core. In the next steps, lanosterol is transformed to zymosterol through a complex process involving various demethylation, reduction and desaturation reactions. The lanosterol 14-alpha-demethylase ERG11 (also known as CYP51) catalyzes C14-demethylation of lanosterol to produce 4,4'-dimethyl cholesta-8,14,24-triene-3-beta-ol, which is critical for ergosterol biosynthesis. The C-14 reductase ERG24 reduces the C14=C15 double bond of 4,4-dimethyl-cholesta-8,14,24-trienol to produce 4,4-dimethyl-cholesta-8,24-dienol. 4,4-dimethyl-cholesta-8,24-dienol is substrate of the C-4 demethylation complex ERG25-ERG26-ERG27 in which ERG25 catalyzes the three-step monooxygenation required for the demethylation of 4,4-dimethyl and 4alpha-methylsterols, ERG26 catalyzes the oxidative decarboxylation that results in a reduction of the 3-beta-hydroxy group at the C-3 carbon to an oxo group, and ERG27 is responsible for the reduction of the keto group on the C-3. ERG28 has a role as a scaffold to help anchor ERG25, ERG26 and ERG27 to the endoplasmic reticulum and ERG29 regulates the activity of the iron-containing C4-methylsterol oxidase ERG25. Then, the sterol 24-C-methyltransferase ERG6 catalyzes the methyl transfer from S-adenosyl-methionine to the C-24 of zymosterol to form fecosterol. The C-8 sterol isomerase ERG2 catalyzes the reaction which results in unsaturation at C-7 in the B ring of sterols and thus converts fecosterol to episterol. The sterol-C5-desaturase ERG3 then catalyzes the introduction of a C-5 double bond in the B ring to produce 5-dehydroepisterol. The C-22 sterol desaturase ERG5 further converts 5-dehydroepisterol into ergosta-5,7,22,24(28)-tetraen-3beta-ol by forming the C-22(23) double bond in the sterol side chain. Finally, ergosta-5,7,22,24(28)-tetraen-3beta-ol is substrate of the C-24(28) sterol reductase ERG4 to produce ergosterol. This is C-22 sterol desaturase ERG5 from Saccharomyces cerevisiae (strain ATCC 204508 / S288c) (Baker's yeast).